Consider the following 154-residue polypeptide: Universal stress protein Sll1388 (154 aa).

Belongs to the universal stress protein A family.

The chain is Universal stress protein Sll1388 from Synechocystis sp. (strain ATCC 27184 / PCC 6803 / Kazusa).